Here is a 108-residue protein sequence, read N- to C-terminus: Thiosulfate sulfurtransferase GlpE (108 aa).

A Rhodanese domain is found at 17 to 105 (RQGAAVLVDI…WHRRFPANVA (89 aa)). Cysteine 65 serves as the catalytic Cysteine persulfide intermediate.

It belongs to the GlpE family.

The protein localises to the cytoplasm. It catalyses the reaction thiosulfate + hydrogen cyanide = thiocyanate + sulfite + 2 H(+). It carries out the reaction thiosulfate + [thioredoxin]-dithiol = [thioredoxin]-disulfide + hydrogen sulfide + sulfite + 2 H(+). Transferase that catalyzes the transfer of sulfur from thiosulfate to thiophilic acceptors such as cyanide or dithiols. May function in a CysM-independent thiosulfate assimilation pathway by catalyzing the conversion of thiosulfate to sulfite, which can then be used for L-cysteine biosynthesis. The protein is Thiosulfate sulfurtransferase GlpE of Salmonella agona (strain SL483).